The sequence spans 720 residues: Chloroplastic group IIA intron splicing facilitator CRS1, chloroplastic (720 aa).

A chloroplast-targeting transit peptide spans 1-77; sequence MRNGINILSY…DQFRENRGVS (77 aa). Residues 131–159 are a coiled coil; the sequence is KAMKKIVRNVEKLDEDSDSEETQMDDLSE. CRM domains lie at 205–301 and 359–456; these read LILD…EGQD and AKLT…EVAD. 2 coiled-coil regions span residues 447–477 and 517–553; these read KDFL…TKRE and RNLE…NMEL. The region spanning 570-670 is the CRM 3 domain; that stretch reads EILTNEEREC…KNYKRPSSKL (101 aa).

In terms of assembly, homodimer. Interacts with RNA. Part of large ribonucleo-protein complexes that include group IIA introns and CRS1.

Its subcellular location is the plastid. The protein resides in the chloroplast stroma. Functionally, required for the splicing of group IIA introns in chloroplasts, by regulating the intron folding. Forms splicing particles with RNA. May also be involved in chloroplast protein translation. This chain is Chloroplastic group IIA intron splicing facilitator CRS1, chloroplastic, found in Arabidopsis thaliana (Mouse-ear cress).